The sequence spans 353 residues: Histidine biosynthesis bifunctional protein HisB (353 aa).

Residues 1-164 form a histidinol-phosphatase region; it reads MKNKILFIDR…HITKYIIKHN (164 aa). Asp-9 (nucleophile) is an active-site residue. The Mg(2+) site is built by Asp-9 and Asp-11. Asp-11 acts as the Proton donor in catalysis. 4 residues coordinate Zn(2+): Cys-93, His-95, Cys-101, and Cys-103. Residue Asp-128 participates in Mg(2+) binding. The interval 165–353 is imidazoleglycerol-phosphate dehydratase; the sequence is RYAEIIRRTK…NMLPTSKGIL (189 aa).

This sequence in the N-terminal section; belongs to the histidinol-phosphatase family. The protein in the C-terminal section; belongs to the imidazoleglycerol-phosphate dehydratase family. Requires Mg(2+) as cofactor. The cofactor is Zn(2+).

The protein resides in the cytoplasm. The enzyme catalyses D-erythro-1-(imidazol-4-yl)glycerol 3-phosphate = 3-(imidazol-4-yl)-2-oxopropyl phosphate + H2O. The catalysed reaction is L-histidinol phosphate + H2O = L-histidinol + phosphate. Its pathway is amino-acid biosynthesis; L-histidine biosynthesis; L-histidine from 5-phospho-alpha-D-ribose 1-diphosphate: step 6/9. It participates in amino-acid biosynthesis; L-histidine biosynthesis; L-histidine from 5-phospho-alpha-D-ribose 1-diphosphate: step 8/9. This Buchnera aphidicola subsp. Acyrthosiphon pisum (strain Tuc7) protein is Histidine biosynthesis bifunctional protein HisB.